Reading from the N-terminus, the 341-residue chain is MLDRSFSAEIQQRIDQKTKPLGALGQLERVAHHLALIQSQNQDQAVTQLAIHQPTVLVFAADHGIAAQGVSIAPSAVTEQMVQNFLAGGAAINCFCRTEHAAMRVIDCGILRAQPAHADLIEQRLGAGTHNLAEQAAMSSEQVQEGIALGKALIHREVESGCNLLMFGEMGIGNTSSAAAILAALSGLPIEVCVGRGTGITDEQYQRKRALVTQGVERCLGAAPQDVLQQVGGFEIVQMVGAFMGAYEKQTPVLVDGFIVTVAAYVATLIEPNVRDFLLFAHCSQETGHRAVLEMLAAEPLLDLGLRLGEGTGAVLALGLVRAAVEFYNHMASFADAGVTV.

The active-site Proton acceptor is E310.

It belongs to the CobT family.

The enzyme catalyses 5,6-dimethylbenzimidazole + nicotinate beta-D-ribonucleotide = alpha-ribazole 5'-phosphate + nicotinate + H(+). The protein operates within nucleoside biosynthesis; alpha-ribazole biosynthesis; alpha-ribazole from 5,6-dimethylbenzimidazole: step 1/2. Functionally, catalyzes the synthesis of alpha-ribazole-5'-phosphate from nicotinate mononucleotide (NAMN) and 5,6-dimethylbenzimidazole (DMB). This is Nicotinate-nucleotide--dimethylbenzimidazole phosphoribosyltransferase from Vibrio cholerae serotype O1 (strain ATCC 39315 / El Tor Inaba N16961).